We begin with the raw amino-acid sequence, 890 residues long: Protein FAM171A1 (890 aa).

The N-terminal stretch at 1–21 (MSRSAALLLCLLGCHVWKAVT) is a signal peptide. The Extracellular portion of the chain corresponds to 22 to 303 (KTLREPGAGA…VTQDITTYHT (282 aa)). 2 N-linked (GlcNAc...) asparagine glycosylation sites follow: Asn-190 and Asn-194. A helical membrane pass occupies residues 304–324 (VFLLAILGGMAFILLVLLCLL). Over 325-890 (LYYCRRKCMK…ERPLMAFNIK (566 aa)) the chain is Cytoplasmic. 6 positions are modified to phosphoserine: Ser-358, Ser-360, Ser-371, Ser-422, Ser-443, and Ser-525. Disordered stretches follow at residues 730 to 759 (AGRN…RGDA) and 818 to 890 (EGSS…FNIK). The span at 747–757 (NEPKSARKGRG) shows a compositional bias: basic and acidic residues. The span at 822–833 (RRSGGQLPSLQE) shows a compositional bias: polar residues. Phosphoserine is present on residues Ser-849 and Ser-855. Acidic residues predominate over residues 858 to 869 (EEEEDDDDDDQG). Residues 870–883 (EDKKSPWQKREERP) are compositionally biased toward basic and acidic residues.

This sequence belongs to the FAM171 family. Interacts with ADAM10, NSG1 and OAZ1.

The protein localises to the cell membrane. In terms of biological role, involved in the regulation of the cytoskeletal dynamics, plays a role in actin stress fiber formation. In Pongo abelii (Sumatran orangutan), this protein is Protein FAM171A1 (FAM171A1).